A 387-amino-acid chain; its full sequence is S-adenosylmethionine synthase (387 aa).

H19 contacts ATP. D21 contributes to the Mg(2+) binding site. E47 contacts K(+). Q103 is an L-methionine binding site. The interval 103–113 (QSPDIAQGVEL) is flexible loop. ATP-binding positions include 167-169 (DMK), 233-234 (RF), D242, 248-249 (RK), A265, and K269. D242 is an L-methionine binding site. L-methionine is bound at residue K273.

It belongs to the AdoMet synthase family. As to quaternary structure, homotetramer; dimer of dimers. Mg(2+) is required as a cofactor. K(+) serves as cofactor.

The protein localises to the cytoplasm. The enzyme catalyses L-methionine + ATP + H2O = S-adenosyl-L-methionine + phosphate + diphosphate. The protein operates within amino-acid biosynthesis; S-adenosyl-L-methionine biosynthesis; S-adenosyl-L-methionine from L-methionine: step 1/1. In terms of biological role, catalyzes the formation of S-adenosylmethionine (AdoMet) from methionine and ATP. The overall synthetic reaction is composed of two sequential steps, AdoMet formation and the subsequent tripolyphosphate hydrolysis which occurs prior to release of AdoMet from the enzyme. The protein is S-adenosylmethionine synthase of Mycoplasma capricolum subsp. capricolum (strain California kid / ATCC 27343 / NCTC 10154).